The primary structure comprises 144 residues: MAKRGGPRTVGVPWRFHLTPGIFMNSLVNVADNSGAKVVKVIGVVGHYSKNVHRRIPGVSVGDMVVVSVQEGKPEMRKQILRAIVVRQRRPFRRPDGTWVAFEDNAVVIVTEEGQVKGTEVHGPVAMEAAQRWPQVASIATMII.

Belongs to the universal ribosomal protein uL14 family. Part of the 50S ribosomal subunit. Forms a cluster with proteins L3 and L24e, part of which may contact the 16S rRNA in 2 intersubunit bridges.

In terms of biological role, binds to 23S rRNA. Forms part of two intersubunit bridges in the 70S ribosome. This chain is Large ribosomal subunit protein uL14, found in Caldivirga maquilingensis (strain ATCC 700844 / DSM 13496 / JCM 10307 / IC-167).